Consider the following 85-residue polypeptide: uncharacterized protein (85 aa).

This is an uncharacterized protein from Lactococcus phage mv4 (Lactococcus delbrueckii bacteriophage mv4).